The primary structure comprises 114 residues: MSAPAAGPPAAAPGDGAPQGPPNLTSNRRLQQTQAQVDEVVDIMRVNVDKVLERDTKLSELDDRADALQAGASQFETSAAKLKRKYWWKNMKMMIIMGVICAIILIIIIVYFST.

Over residues M1–A11 the composition is skewed to pro residues. Residues M1–Q31 are disordered. N-acetylserine is present on S2. Over S2–K92 the chain is Cytoplasmic. Residues R29–K89 enclose the v-SNARE coiled-coil homology domain. The chain crosses the membrane as a helical; Anchor for type IV membrane protein span at residues M93–Y111. The Vesicular portion of the chain corresponds to F112–T114.

This sequence belongs to the synaptobrevin family.

Its subcellular location is the cytoplasmic vesicle. It localises to the secretory vesicle. It is found in the synaptic vesicle membrane. The protein resides in the cell membrane. Functionally, involved in the targeting and/or fusion of transport vesicles to their target membrane. Major SNARE protein of synaptic vesicles which mediates fusion of synaptic vesicles to release neurotransmitters. Essential for fast vesicular exocytosis and activity-dependent neurotransmitter release as well as fast endocytosis that mediates rapid reuse of synaptic vesicles. In Xenopus laevis (African clawed frog), this protein is Vesicle-associated membrane protein 2 (vamp2).